Here is a 413-residue protein sequence, read N- to C-terminus: Histidinol-phosphate aminotransferase, chloroplastic (413 aa).

A chloroplast-targeting transit peptide spans 1–35 (MGVIELCNTSSICIGRAKPSCCSIERNQRRRIICM). Lys273 bears the N6-(pyridoxal phosphate)lysine mark.

Belongs to the class-II pyridoxal-phosphate-dependent aminotransferase family. Histidinol-phosphate aminotransferase subfamily. In terms of assembly, homodimer. The cofactor is pyridoxal 5'-phosphate. In terms of tissue distribution, mainly expressed in green tissues.

It localises to the plastid. Its subcellular location is the chloroplast. The enzyme catalyses L-histidinol phosphate + 2-oxoglutarate = 3-(imidazol-4-yl)-2-oxopropyl phosphate + L-glutamate. It functions in the pathway amino-acid biosynthesis; L-histidine biosynthesis; L-histidine from 5-phospho-alpha-D-ribose 1-diphosphate: step 7/9. This is Histidinol-phosphate aminotransferase, chloroplastic (HPA) from Nicotiana tabacum (Common tobacco).